A 152-amino-acid chain; its full sequence is Small ribosomal subunit protein bS6 (152 aa).

Belongs to the bacterial ribosomal protein bS6 family.

Binds together with bS18 to 16S ribosomal RNA. The chain is Small ribosomal subunit protein bS6 from Bdellovibrio bacteriovorus (strain ATCC 15356 / DSM 50701 / NCIMB 9529 / HD100).